We begin with the raw amino-acid sequence, 167 residues long: Insertion element IS1 4 protein InsB (167 aa).

It belongs to the transposase 27 family.

Functionally, absolutely required for transposition of IS1. This chain is Insertion element IS1 4 protein InsB (insB4), found in Escherichia coli (strain K12).